Reading from the N-terminus, the 304-residue chain is Putative S-adenosyl-L-methionine-dependent methyltransferase MAV_1058 (304 aa).

S-adenosyl-L-methionine is bound by residues aspartate 128 and 157–158 (DL).

Belongs to the UPF0677 family.

Its function is as follows. Exhibits S-adenosyl-L-methionine-dependent methyltransferase activity. This Mycobacterium avium (strain 104) protein is Putative S-adenosyl-L-methionine-dependent methyltransferase MAV_1058.